A 683-amino-acid polypeptide reads, in one-letter code: DNA ligase (683 aa).

Residues 35–39, 81–82, and E112 each bind NAD(+); these read DAEYD and SL. The N6-AMP-lysine intermediate role is filled by K114. NAD(+) is bound by residues R135, E170, K277, and K301. Residues C395, C398, C411, and C417 each contribute to the Zn(2+) site. The region spanning 601 to 683 is the BRCT domain; that stretch reads SSNSVLNNKV…YRMINSEVSE (83 aa).

This sequence belongs to the NAD-dependent DNA ligase family. LigA subfamily. It depends on Mg(2+) as a cofactor. The cofactor is Mn(2+).

It catalyses the reaction NAD(+) + (deoxyribonucleotide)n-3'-hydroxyl + 5'-phospho-(deoxyribonucleotide)m = (deoxyribonucleotide)n+m + AMP + beta-nicotinamide D-nucleotide.. In terms of biological role, DNA ligase that catalyzes the formation of phosphodiester linkages between 5'-phosphoryl and 3'-hydroxyl groups in double-stranded DNA using NAD as a coenzyme and as the energy source for the reaction. It is essential for DNA replication and repair of damaged DNA. This Wolbachia sp. subsp. Brugia malayi (strain TRS) protein is DNA ligase.